A 475-amino-acid polypeptide reads, in one-letter code: MSPKTETKASVGFKAGVKDYRLTYYTPEYQTKDTDILAAFRVTPQPGVPAEEAGAAVAAESSTGTWTTVWTDGLTSLDRYKGRCYDIEPVPGEETQFIAYVAYPLDLFEEGSVTNLFTSIVGNVFGFKALRALRLEDLRIPPAYSKTFQGPPHGIQVERDKLNKYGRPLLGCTIKPKLGLSAKNYGRAVYECLRGGLDFTKDDENVNSQPFMRWRDRFVFCAEAIYKAQAETGEIKGHYLNATAGTCEEMMKRAVFARELGVPIVMHDYLTGGFTANTSLAHYCRDNGLLLHIHRAMHAVIDRQRNHGMHFRVLAKALRMSGGDHIHAGTVVGKLEGERDVTLGFVDLLRDDFIEKDRSRGIYFTQDWVSMPGVLPVASGGIHVWHMPALTEIFGDDSVLQFGGGTLGHPWGNAPGAVANRVALEACVQARNEGRDLAREGNEVIREACKWSPELAAACEIWKEIKFEFDVIDRL.

The propeptide occupies 1 to 2 (MS). At Pro3 the chain carries N-acetylproline. The residue at position 14 (Lys14) is an N6,N6,N6-trimethyllysine. Residues Asn123 and Thr173 each contribute to the substrate site. Lys175 (proton acceptor) is an active-site residue. Lys177 lines the substrate pocket. Positions 201, 203, and 204 each coordinate Mg(2+). At Lys201 the chain carries N6-carboxylysine. The active-site Proton acceptor is His294. Substrate contacts are provided by Arg295, His327, and Ser379.

The protein belongs to the RuBisCO large chain family. Type I subfamily. In terms of assembly, heterohexadecamer of 8 large chains and 8 small chains; disulfide-linked. The disulfide link is formed within the large subunit homodimers. Mg(2+) is required as a cofactor. The disulfide bond which can form in the large chain dimeric partners within the hexadecamer appears to be associated with oxidative stress and protein turnover.

The protein resides in the plastid. The protein localises to the chloroplast. The enzyme catalyses 2 (2R)-3-phosphoglycerate + 2 H(+) = D-ribulose 1,5-bisphosphate + CO2 + H2O. The catalysed reaction is D-ribulose 1,5-bisphosphate + O2 = 2-phosphoglycolate + (2R)-3-phosphoglycerate + 2 H(+). Its function is as follows. RuBisCO catalyzes two reactions: the carboxylation of D-ribulose 1,5-bisphosphate, the primary event in carbon dioxide fixation, as well as the oxidative fragmentation of the pentose substrate in the photorespiration process. Both reactions occur simultaneously and in competition at the same active site. The sequence is that of Ribulose bisphosphate carboxylase large chain from Pinus longaeva (Great Basin bristlecone pine).